The chain runs to 346 residues: MEKLARKSVQKLTPYLSARRIGGTGDVWLNANESPFDNEYRTNFARLNRYSDCQPKALIAAYAAYAGVKPEQTLTSRGADEGIELLIRAFCEPNEDAILYCPPTYGMYSVSAETIGVERKTVPLTEDWQLDLSGIEANLDKVKLVFVCSPNNPTGNLVKREDIIALLEMTKDRAIVVMDEAYIDFCPEASTVDLLAQYSNLAILRTLSKAFALAGLRCGFTLANEELINVLLKVIAPYPVPVPVAEIATQALSEAGLARAKFQVLDLNANRAYLQVGLSMIAGLEVFEGWGNYLLVKFPNGDELFKAAWESGIILRNSPIKDCVRISVGSRDECEKTLGFIRNYYS.

Residue K209 is modified to N6-(pyridoxal phosphate)lysine.

Belongs to the class-II pyridoxal-phosphate-dependent aminotransferase family. Histidinol-phosphate aminotransferase subfamily. In terms of assembly, homodimer. It depends on pyridoxal 5'-phosphate as a cofactor.

It catalyses the reaction L-histidinol phosphate + 2-oxoglutarate = 3-(imidazol-4-yl)-2-oxopropyl phosphate + L-glutamate. It participates in amino-acid biosynthesis; L-histidine biosynthesis; L-histidine from 5-phospho-alpha-D-ribose 1-diphosphate: step 7/9. The protein is Histidinol-phosphate aminotransferase of Vibrio vulnificus (strain YJ016).